The chain runs to 586 residues: Phosphomethylpyrimidine synthase (586 aa).

Residues methionine 1–proline 59 are disordered. The span at valine 22–glutamate 39 shows a compositional bias: basic and acidic residues. Substrate is bound by residues asparagine 193, methionine 222, tyrosine 251, histidine 287, serine 307–glycine 309, aspartate 348–arginine 351, and glutamate 387. Histidine 391 provides a ligand contact to Zn(2+). Tyrosine 414 serves as a coordination point for substrate. Histidine 455 contacts Zn(2+). Positions 535, 538, and 543 each coordinate [4Fe-4S] cluster.

It belongs to the ThiC family. Requires [4Fe-4S] cluster as cofactor.

It catalyses the reaction 5-amino-1-(5-phospho-beta-D-ribosyl)imidazole + S-adenosyl-L-methionine = 4-amino-2-methyl-5-(phosphooxymethyl)pyrimidine + CO + 5'-deoxyadenosine + formate + L-methionine + 3 H(+). It participates in cofactor biosynthesis; thiamine diphosphate biosynthesis. Functionally, catalyzes the synthesis of the hydroxymethylpyrimidine phosphate (HMP-P) moiety of thiamine from aminoimidazole ribotide (AIR) in a radical S-adenosyl-L-methionine (SAM)-dependent reaction. This chain is Phosphomethylpyrimidine synthase, found in Bacillus cereus (strain ZK / E33L).